The following is a 458-amino-acid chain: Adenylosuccinate synthetase (458 aa).

GTP-binding positions include 11–17 (GDEGKGG) and 39–41 (GHT). Residue D12 is the Proton acceptor of the active site. Mg(2+) contacts are provided by D12 and G39. Residues 12 to 15 (DEGK), 37 to 40 (NAGH), T127, R141, Q232, T247, and R330 each bind IMP. The active-site Proton donor is the H40. 326–332 (TVTGRPR) contacts substrate. Residues R332, 358 to 360 (HLD), and 443 to 445 (GVG) each bind GTP.

This sequence belongs to the adenylosuccinate synthetase family. In terms of assembly, homodimer. Mg(2+) serves as cofactor.

It localises to the cytoplasm. It catalyses the reaction IMP + L-aspartate + GTP = N(6)-(1,2-dicarboxyethyl)-AMP + GDP + phosphate + 2 H(+). It functions in the pathway purine metabolism; AMP biosynthesis via de novo pathway; AMP from IMP: step 1/2. In terms of biological role, plays an important role in the de novo pathway of purine nucleotide biosynthesis. Catalyzes the first committed step in the biosynthesis of AMP from IMP. This is Adenylosuccinate synthetase from Haloarcula marismortui (strain ATCC 43049 / DSM 3752 / JCM 8966 / VKM B-1809) (Halobacterium marismortui).